Here is a 285-residue protein sequence, read N- to C-terminus: Chemotaxis protein LafT (285 aa).

4 consecutive transmembrane segments (helical) span residues 4 to 23, 34 to 51, 171 to 191, and 201 to 222; these read FLGVLTILVCVFGGYMWAGG, FLIIIGAAAGSLIIGNPP, ALPGFGILAAVGGIIITMQAI, and HVAAALVGTFIGIFGCYCGLDP. The Cytoplasmic portion of the chain corresponds to 223-285; the sequence is LSNAMAQRVK…MEKWLAEQEG (63 aa).

This sequence belongs to the MotA family.

It is found in the cell inner membrane. Required for rotation of the flagellar motor. Probable transmembrane proton channel. The polypeptide is Chemotaxis protein LafT (lafT) (Vibrio parahaemolyticus serotype O3:K6 (strain RIMD 2210633)).